Consider the following 1040-residue polypeptide: Multidrug resistance protein MdtB (1040 aa).

A run of 12 helical transmembrane segments spans residues 16 to 36, 347 to 367, 369 to 389, 396 to 416, 440 to 460, 472 to 492, 537 to 557, 863 to 883, 888 to 908, 911 to 931, 968 to 988, and 998 to 1018; these read FIMR…AGII, LMMA…NIPA, IIPG…MVFL, LTLM…IVVI, IGFT…PLLF, FAIT…TLTP, WLTL…WVFI, LGST…VLGI, FIHP…ALLA, IAGS…IGIV, ILMT…STGV, and IGMV…TPVI.

It belongs to the resistance-nodulation-cell division (RND) (TC 2.A.6) family. MdtB subfamily. Part of a tripartite efflux system composed of MdtA, MdtB and MdtC. MdtB forms a heteromultimer with MdtC.

The protein resides in the cell inner membrane. Its function is as follows. The MdtABC tripartite complex confers resistance against novobiocin and deoxycholate. The sequence is that of Multidrug resistance protein MdtB from Escherichia coli O17:K52:H18 (strain UMN026 / ExPEC).